We begin with the raw amino-acid sequence, 399 residues long: Lipoyl synthase, mitochondrial (399 aa).

The N-terminal 30 residues, 1–30 (MRAVLELTRRRARNARFARARAVVGARARA), are a transit peptide targeting the mitochondrion. The span at 31–41 (ADAQELRDDSK) shows a compositional bias: basic and acidic residues. The segment at 31-58 (ADAQELRDDSKGGSSVDKATSTAAEARE) is disordered. [4Fe-4S] cluster is bound by residues cysteine 131, cysteine 136, cysteine 142, cysteine 162, cysteine 166, cysteine 169, and serine 375. A Radical SAM core domain is found at 145–364 (GGDGKTATAT…QEIAEEMGFL (220 aa)).

It belongs to the radical SAM superfamily. Lipoyl synthase family. [4Fe-4S] cluster is required as a cofactor.

It is found in the mitochondrion. It catalyses the reaction [[Fe-S] cluster scaffold protein carrying a second [4Fe-4S](2+) cluster] + N(6)-octanoyl-L-lysyl-[protein] + 2 oxidized [2Fe-2S]-[ferredoxin] + 2 S-adenosyl-L-methionine + 4 H(+) = [[Fe-S] cluster scaffold protein] + N(6)-[(R)-dihydrolipoyl]-L-lysyl-[protein] + 4 Fe(3+) + 2 hydrogen sulfide + 2 5'-deoxyadenosine + 2 L-methionine + 2 reduced [2Fe-2S]-[ferredoxin]. Its pathway is protein modification; protein lipoylation via endogenous pathway; protein N(6)-(lipoyl)lysine from octanoyl-[acyl-carrier-protein]: step 2/2. Functionally, catalyzes the radical-mediated insertion of two sulfur atoms into the C-6 and C-8 positions of the octanoyl moiety bound to the lipoyl domains of lipoate-dependent enzymes, thereby converting the octanoylated domains into lipoylated derivatives. The protein is Lipoyl synthase, mitochondrial of Ostreococcus lucimarinus (strain CCE9901).